Consider the following 245-residue polypeptide: Orotidine 5'-phosphate decarboxylase (245 aa).

Substrate contacts are provided by residues Asp-22, Lys-44, 71–80, Thr-131, Arg-192, Gln-201, Gly-221, and Arg-222; that span reads DLKFHDIPNT. The Proton donor role is filled by Lys-73.

The protein belongs to the OMP decarboxylase family. Type 1 subfamily. Homodimer.

It carries out the reaction orotidine 5'-phosphate + H(+) = UMP + CO2. It functions in the pathway pyrimidine metabolism; UMP biosynthesis via de novo pathway; UMP from orotate: step 2/2. Functionally, catalyzes the decarboxylation of orotidine 5'-monophosphate (OMP) to uridine 5'-monophosphate (UMP). The sequence is that of Orotidine 5'-phosphate decarboxylase from Klebsiella pneumoniae (strain 342).